Consider the following 249-residue polypeptide: 3-deoxy-manno-octulosonate cytidylyltransferase (249 aa).

This sequence belongs to the KdsB family.

It localises to the cytoplasm. The enzyme catalyses 3-deoxy-alpha-D-manno-oct-2-ulosonate + CTP = CMP-3-deoxy-beta-D-manno-octulosonate + diphosphate. It functions in the pathway nucleotide-sugar biosynthesis; CMP-3-deoxy-D-manno-octulosonate biosynthesis; CMP-3-deoxy-D-manno-octulosonate from 3-deoxy-D-manno-octulosonate and CTP: step 1/1. It participates in bacterial outer membrane biogenesis; lipopolysaccharide biosynthesis. In terms of biological role, activates KDO (a required 8-carbon sugar) for incorporation into bacterial lipopolysaccharide in Gram-negative bacteria. In Oleidesulfovibrio alaskensis (strain ATCC BAA-1058 / DSM 17464 / G20) (Desulfovibrio alaskensis), this protein is 3-deoxy-manno-octulosonate cytidylyltransferase.